Here is a 217-residue protein sequence, read N- to C-terminus: Translation initiation factor IF-3 (217 aa).

Residues 170-217 are disordered; it reads KKTEAMAEARQAQEARKADAKANPGKSQNAAETDDAEAEAPAEAPAEA. Over residues 172–189 the composition is skewed to basic and acidic residues; that stretch reads TEAMAEARQAQEARKADA.

Belongs to the IF-3 family. As to quaternary structure, monomer.

The protein resides in the cytoplasm. Its function is as follows. IF-3 binds to the 30S ribosomal subunit and shifts the equilibrium between 70S ribosomes and their 50S and 30S subunits in favor of the free subunits, thus enhancing the availability of 30S subunits on which protein synthesis initiation begins. This is Translation initiation factor IF-3 from Streptomyces coelicolor (strain ATCC BAA-471 / A3(2) / M145).